Consider the following 251-residue polypeptide: Imidazole glycerol phosphate synthase subunit HisF (251 aa).

Active-site residues include aspartate 11 and aspartate 130.

It belongs to the HisA/HisF family. As to quaternary structure, heterodimer of HisH and HisF.

Its subcellular location is the cytoplasm. The catalysed reaction is 5-[(5-phospho-1-deoxy-D-ribulos-1-ylimino)methylamino]-1-(5-phospho-beta-D-ribosyl)imidazole-4-carboxamide + L-glutamine = D-erythro-1-(imidazol-4-yl)glycerol 3-phosphate + 5-amino-1-(5-phospho-beta-D-ribosyl)imidazole-4-carboxamide + L-glutamate + H(+). It participates in amino-acid biosynthesis; L-histidine biosynthesis; L-histidine from 5-phospho-alpha-D-ribose 1-diphosphate: step 5/9. In terms of biological role, IGPS catalyzes the conversion of PRFAR and glutamine to IGP, AICAR and glutamate. The HisF subunit catalyzes the cyclization activity that produces IGP and AICAR from PRFAR using the ammonia provided by the HisH subunit. The protein is Imidazole glycerol phosphate synthase subunit HisF of Pelodictyon phaeoclathratiforme (strain DSM 5477 / BU-1).